The chain runs to 541 residues: uncharacterized protein (541 aa).

Transmembrane regions (helical) follow at residues 10–32 (LNNQ…KINI), 39–57 (SSAI…YTLP), 62–84 (TLGL…FFSL), 91–113 (LSLG…TYLF), and 146–168 (APAA…IQII). RCK C-terminal domains follow at residues 183–260 (LNKE…DDLE) and 268–352 (TPVD…IFGN). 6 consecutive transmembrane segments (helical) span residues 357–375 (SYNF…GFIL), 385–407 (SGIF…SNIY), 428–447 (GLVL…ILAT), 452–474 (GLQL…VFIC), 481–500 (PFLS…PGLA), and 515–537 (YATV…IFIV).

It belongs to the AAE transporter (TC 2.A.81) family.

It localises to the cell membrane. This is an uncharacterized protein from Desulfotalea psychrophila (strain LSv54 / DSM 12343).